Reading from the N-terminus, the 400-residue chain is WD repeat and FYVE domain-containing protein 2 (400 aa).

6 WD repeats span residues 22-61 (GSQE…QYWP), 66-105 (AMPS…NKMT), 112-150 (AHQS…QRLG), 153-192 (RTSA…CTLL), 197-236 (GHTG…GTAI), and 240-279 (GHND…QETP). The FYVE-type zinc finger occupies 281 to 352 (WLDSDSCQKC…VCDSCHEAIT (72 aa)). Residues Cys287, Cys290, Cys314, Cys317, Cys322, Cys325, Cys344, and Cys347 each coordinate Zn(2+). The stretch at 364 to 399 (DSKHNIVHVHFDATRGWLLTSGTDKVIKLWDMTPVV) is one WD 7 repeat.

Homodimer. Interacts (via WD repeats 1-3) with AKT1, AKT2, PRKCZ and PRKCI. Interacts with VAMP2. Forms a complex with VAMP2 and PRKCZ. Interacts with FOXO1. Forms a complex with AKT1 and FOXO1. In terms of tissue distribution, highly expressed in the brain (at protein level).

It localises to the endosome. It is found in the early endosome. The protein localises to the cytoplasm. In terms of biological role, acts in an adapter protein-like fashion to mediate the interaction between the kinase PRKCZ and its substrate VAMP2 and increases the PRKCZ-dependent phosphorylation of VAMP2. Positively regulates adipocyte differentiation, by facilitating the phosphorylation and thus inactivation of the anti-adipogenetic transcription factor FOXO1 by the kinase AKT1. Plays a role in endosomal control of AKT2 signaling; required for insulin-stimulated AKT2 phosphorylation and glucose uptake and insulin-stimulated phosphorylation of AKT2 substrates. Participates in transferrin receptor endocytosis. This Mus musculus (Mouse) protein is WD repeat and FYVE domain-containing protein 2 (Wdfy2).